The chain runs to 346 residues: Elongation factor Ts (346 aa).

The segment at 80-83 (TDFV) is involved in Mg(2+) ion dislocation from EF-Tu.

The protein belongs to the EF-Ts family.

It is found in the cytoplasm. In terms of biological role, associates with the EF-Tu.GDP complex and induces the exchange of GDP to GTP. It remains bound to the aminoacyl-tRNA.EF-Tu.GTP complex up to the GTP hydrolysis stage on the ribosome. The chain is Elongation factor Ts from Streptococcus pyogenes serotype M18 (strain MGAS8232).